The chain runs to 297 residues: MNREHAKAHLLLEALPYIRNFYGQTVVIKYGGHAMVDEQLQESFALNVILLKYIGINPVIVHGGGPQIGRMLKLLNIESQFKQGLRVTDDATMDVVEMVLVGKVNKNIVNLINLKGGSAVGLSGKDGRLITARKLEMVLERGDAPPEIIDLGKVGEVTGINTQLITTLLAQGFIPVIAPVGVDEDGETYNINADTVAGAVAAALGAKRLVLLTDVSGVLDKDKTLISSLDIKEASQAMADGVLVGGMIPKVSCCMEAVDAGVEKAHILDGRVENCIILELFTRSGIGTEIVCKRCQA.

Substrate-binding positions include 64–65 (GG), Arg86, and Asn190.

The protein belongs to the acetylglutamate kinase family. ArgB subfamily.

The protein localises to the cytoplasm. It carries out the reaction N-acetyl-L-glutamate + ATP = N-acetyl-L-glutamyl 5-phosphate + ADP. Its pathway is amino-acid biosynthesis; L-arginine biosynthesis; N(2)-acetyl-L-ornithine from L-glutamate: step 2/4. Its function is as follows. Catalyzes the ATP-dependent phosphorylation of N-acetyl-L-glutamate. The protein is Acetylglutamate kinase of Solidesulfovibrio magneticus (strain ATCC 700980 / DSM 13731 / RS-1) (Desulfovibrio magneticus).